Reading from the N-terminus, the 87-residue chain is Small ribosomal subunit protein uS15 (87 aa).

The span at 1–19 (MDKAKKQELMAKHARHEGD) shows a compositional bias: basic and acidic residues. The disordered stretch occupies residues 1-23 (MDKAKKQELMAKHARHEGDTGSP).

The protein belongs to the universal ribosomal protein uS15 family. In terms of assembly, part of the 30S ribosomal subunit. Forms a bridge to the 50S subunit in the 70S ribosome, contacting the 23S rRNA.

Functionally, one of the primary rRNA binding proteins, it binds directly to 16S rRNA where it helps nucleate assembly of the platform of the 30S subunit by binding and bridging several RNA helices of the 16S rRNA. In terms of biological role, forms an intersubunit bridge (bridge B4) with the 23S rRNA of the 50S subunit in the ribosome. The sequence is that of Small ribosomal subunit protein uS15 from Clostridium botulinum (strain Loch Maree / Type A3).